The following is a 76-amino-acid chain: Defensin-like protein 71 (76 aa).

An N-terminal signal peptide occupies residues 1–22 (MAMTQVFVIFILLATSLCNSNA). 4 disulfides stabilise this stretch: C36-C74, C40-C63, C49-C72, and C53-C73.

Belongs to the DEFL family.

The protein localises to the secreted. This Arabidopsis thaliana (Mouse-ear cress) protein is Defensin-like protein 71 (LCR84).